Reading from the N-terminus, the 158-residue chain is Retinoic acid receptor beta (158 aa).

The span at 1–18 (RHSAQSIETQSTSSEELV) shows a compositional bias: low complexity. The interval 1–24 (RHSAQSIETQSTSSEELVPSPPSP) is disordered. Positions 31-106 (YKPCFVCQDK…VGMSKESVRN (76 aa)) form a DNA-binding region, nuclear receptor. 2 NR C4-type zinc fingers span residues 34–54 (CFVC…CEGC) and 70–94 (CHRD…LQRC). In terms of domain architecture, NR LBD spans 129 to 158 (ELDDLTEKIRKAHQETFPSLCQLGKYTTNS).

Belongs to the nuclear hormone receptor family. NR1 subfamily. In terms of assembly, heterodimer; with a RXR molecule. Binds DNA preferentially as a RAR/RXR heterodimer.

It is found in the nucleus. Its function is as follows. Receptor for retinoic acid. Retinoic acid receptors bind as heterodimers to their target response elements in response to their ligands, all-trans or 9-cis retinoic acid, and regulate gene expression in various biological processes. The RAR/RXR heterodimers bind to the retinoic acid response elements (RARE) composed of tandem 5'-AGGTCA-3' sites known as DR1-DR5. The chain is Retinoic acid receptor beta (RARB) from Notophthalmus viridescens (Eastern newt).